The sequence spans 1441 residues: MEDKKQQQQQQREEAEAEEEAPVVPSSLRAAATCRSLSSLSSSLRWDHRGDDDEEEAELRWAAIERLPTLDRMRTSVLSSEAVDVRRLGAAQRRVLVERLVADIQRDNLRLLRKQRRRMERVGVRQPTVEVRWRNVRVEADCQVVSGKPLPTLLNTVLATARGLSRRPHARIPILNDVTGILKPSRLTLLLGPPGCGKTTLLLALAGKLDKNLKVTGEVEYNGANLNTFVPEKTSAYISQYDLHVPEMTVRETLDFSARFQGVGTRAEIMKEVIRREKEAGITPDPDIDTYMKAISVEGLERSMQTDYIMKIMGLDICADIIVGDIMRRGISGGEKKRLTTGEMIVGPSRALFMDEISTGLDSSTTFQIVSCLQQVAHISESTILVSLLQPAPETYDLFDDIILMAEGKIVYHGSKSCIMNFFESCGFKCPERKGAADFLQEVLSKKDQQQYWSRTEETYNFVTIDHFCEKFKASQVGQNLVEELANPFDKSEVYNNALSLNIYSLTKWDLLKACFAREILLMRRNAFIYITKVVQLGLLAVITGTVFLRTHMGVDRAHADYYMGSLFYALILLLVNGFPELAIAVSRLPVFYKQRDYYFYPAWAYAIPSFILKIPLSLVESITWTSISYYLIGYTPEASRFFCQLLILFLVHTGALSLFRCVASYCQTMVASSVGGTMSFLVILLFGGFIIPRLSMPNWLKWGFWISPLSYAEIGLTGNEFLAPRWLKTTTSGVTLGRRVLMDRGLDFSSYFYWISASALIGFILLLNVGYAIGLTIKKPTGTSRAIISRDKFSTFDRRGKDMSKDMDNRMPKLQVGNALAPNKTGTMVLPFSPLTISFQDVNYYVDTPVEMREQGYKERKLQLLHNITGAFQPGVLSALMGVTGAGKTTLLDVLAGRKTGGVIEGDIRVGGYPKIQQTFARISGYCEQTDVHSPQITVEESVAYSAWLRLPTEVDSKTRREFVDEVIQTIELDDIRDALVGLPGVSGLSTEQRKRLTIAVELVSNPSVIFMDEPTSGLDARAAAIVMRAVKNVADTGRTVVCTIHQPSIEIFEAFDELMLMKRGGELIYAGPLGLHSCNVIHYFETIPGVPKIKDNYNPSTWMLEVTCASMEAQLGVDFAQIYRESTMCKDKDALVKSLSKPALGTSDLHFPTRFPQKFREQLKACIWKQCLSYWRSPSYNLVRILFITISCIVFGVLFWQQGDINHINDQQGLFTILGCMYGTTLFTGINNCQSVIPFISIERSVVYRERFAGMYSPWAYSLAQVAMEIPYVLVQILLIMFIAYPMIGYAWTAAKFFWFMYTIACTLLYFLYFGMMIVSLTPNIQVASILASMFYTLQNLMSGFIVPAPQIPRWWIWLYYTSPLSWTLNVFFTTQFGDEHQKEISVFGETKSVAAFIKDYFGFRHDLLPLAAIILAMFPILFAILFGLSISKLNFQRR.

Over residues 1–14 (MEDKKQQQQQQREE) the composition is skewed to basic and acidic residues. Residues 1 to 28 (MEDKKQQQQQQREEAEAEEEAPVVPSSL) form a disordered region. One can recognise an ABC transporter 1 domain in the interval 159-432 (ATARGLSRRP…FESCGFKCPE (274 aa)). 192–199 (GPPGCGKT) serves as a coordination point for ATP. In terms of domain architecture, ABC transmembrane type-2 1 spans 510 to 722 (DLLKACFARE…AEIGLTGNEF (213 aa)). The next 6 membrane-spanning stretches (helical) occupy residues 528–548 (FIYI…GTVF), 566–586 (SLFY…AIAV), 600–620 (FYPA…LSLV), 642–662 (FFCQ…LFRC), 672–692 (ASSV…GFII), and 758–778 (ASAL…GLTI). The 253-residue stretch at 838–1090 (ISFQDVNYYV…NVIHYFETIP (253 aa)) folds into the ABC transporter 2 domain. 883-890 (GVTGAGKT) contributes to the ATP binding site. One can recognise an ABC transmembrane type-2 2 domain in the interval 1163–1379 (EQLKACIWKQ…TLNVFFTTQF (217 aa)). 7 helical membrane-spanning segments follow: residues 1187–1207 (ILFI…QGDI), 1215–1235 (GLFT…INNC), 1272–1292 (IPYV…MIGY), 1300–1320 (FWFM…GMMI), 1329–1349 (VASI…GFIV), 1357–1377 (WWIW…FFTT), and 1413–1433 (LAAI…GLSI).

The protein belongs to the ABC transporter superfamily. ABCG family. PDR (TC 3.A.1.205) subfamily.

The protein localises to the membrane. Its function is as follows. May be a general defense protein. The chain is ABC transporter G family member 41 from Oryza sativa subsp. japonica (Rice).